We begin with the raw amino-acid sequence, 219 residues long: Phosphate-specific transport system accessory protein PhoU homolog (219 aa).

This sequence belongs to the PhoU family. In terms of assembly, homodimer.

It is found in the cytoplasm. Plays a role in the regulation of phosphate uptake. Encoded together with proteins of the phosphate-specific transport (Pst) system in the polycistronic pstSCAB-phoU operon. This is Phosphate-specific transport system accessory protein PhoU homolog from Clostridium acetobutylicum (strain ATCC 824 / DSM 792 / JCM 1419 / IAM 19013 / LMG 5710 / NBRC 13948 / NRRL B-527 / VKM B-1787 / 2291 / W).